The sequence spans 356 residues: Holliday junction branch migration complex subunit RuvB (356 aa).

A large ATPase domain (RuvB-L) region spans residues 4-190 (TDKLAAERII…FGIVARLEFY (187 aa)). ATP-binding positions include L29, R30, G71, K74, T75, T76, 137-139 (EDY), R180, Y190, and R227. Position 75 (T75) interacts with Mg(2+). The interval 191–261 (DAEQLSRIVR…VADAALAMLD (71 aa)) is small ATPAse domain (RuvB-S). The head domain (RuvB-H) stretch occupies residues 264–356 (PVGFDLMDRK…NLWDTPDAEC (93 aa)). R300, R319, and R324 together coordinate DNA.

It belongs to the RuvB family. In terms of assembly, homohexamer. Forms an RuvA(8)-RuvB(12)-Holliday junction (HJ) complex. HJ DNA is sandwiched between 2 RuvA tetramers; dsDNA enters through RuvA and exits via RuvB. An RuvB hexamer assembles on each DNA strand where it exits the tetramer. Each RuvB hexamer is contacted by two RuvA subunits (via domain III) on 2 adjacent RuvB subunits; this complex drives branch migration. In the full resolvosome a probable DNA-RuvA(4)-RuvB(12)-RuvC(2) complex forms which resolves the HJ.

Its subcellular location is the cytoplasm. It catalyses the reaction ATP + H2O = ADP + phosphate + H(+). In terms of biological role, the RuvA-RuvB-RuvC complex processes Holliday junction (HJ) DNA during genetic recombination and DNA repair, while the RuvA-RuvB complex plays an important role in the rescue of blocked DNA replication forks via replication fork reversal (RFR). RuvA specifically binds to HJ cruciform DNA, conferring on it an open structure. The RuvB hexamer acts as an ATP-dependent pump, pulling dsDNA into and through the RuvAB complex. RuvB forms 2 homohexamers on either side of HJ DNA bound by 1 or 2 RuvA tetramers; 4 subunits per hexamer contact DNA at a time. Coordinated motions by a converter formed by DNA-disengaged RuvB subunits stimulates ATP hydrolysis and nucleotide exchange. Immobilization of the converter enables RuvB to convert the ATP-contained energy into a lever motion, pulling 2 nucleotides of DNA out of the RuvA tetramer per ATP hydrolyzed, thus driving DNA branch migration. The RuvB motors rotate together with the DNA substrate, which together with the progressing nucleotide cycle form the mechanistic basis for DNA recombination by continuous HJ branch migration. Branch migration allows RuvC to scan DNA until it finds its consensus sequence, where it cleaves and resolves cruciform DNA. This Burkholderia pseudomallei (strain 668) protein is Holliday junction branch migration complex subunit RuvB.